A 356-amino-acid polypeptide reads, in one-letter code: tRNA N6-adenosine threonylcarbamoyltransferase (356 aa).

Fe cation is bound by residues histidine 115 and histidine 119. Substrate-binding positions include 138–142, aspartate 171, glycine 184, and asparagine 283; that span reads LVSGG. Aspartate 311 contributes to the Fe cation binding site.

This sequence belongs to the KAE1 / TsaD family. Fe(2+) is required as a cofactor.

It is found in the cytoplasm. The catalysed reaction is L-threonylcarbamoyladenylate + adenosine(37) in tRNA = N(6)-L-threonylcarbamoyladenosine(37) in tRNA + AMP + H(+). Functionally, required for the formation of a threonylcarbamoyl group on adenosine at position 37 (t(6)A37) in tRNAs that read codons beginning with adenine. Is involved in the transfer of the threonylcarbamoyl moiety of threonylcarbamoyl-AMP (TC-AMP) to the N6 group of A37, together with TsaE and TsaB. TsaD likely plays a direct catalytic role in this reaction. This chain is tRNA N6-adenosine threonylcarbamoyltransferase, found in Prochlorococcus marinus (strain NATL1A).